We begin with the raw amino-acid sequence, 80 residues long: Defensin-like protein 1 (80 aa).

The N-terminal stretch at 1-29 (MAKFASIIALLFAALVLFAAFEAPTMVEA) is a signal peptide. A Pyrrolidone carboxylic acid modification is found at glutamine 30. 4 disulfide bridges follow: cysteine 33–cysteine 80, cysteine 44–cysteine 65, cysteine 50–cysteine 74, and cysteine 54–cysteine 76.

The protein belongs to the DEFL family. Forms oligomers in its native state.

It localises to the secreted. In terms of biological role, possesses antifungal activity sensitive to inorganic cations. The chain is Defensin-like protein 1 (AFP1) from Raphanus sativus (Radish).